A 509-amino-acid chain; its full sequence is MVLWILWRPFGFSRRLLKLERHSITESKSLIPLAWTSLTQTLSESPGIFLLGQRKRFSTMPEIETHERDSELFSPPSDVRGMTKLDRTAFKKTVNIPVLKVRKEIVSRLMRSLRRAALQRPGIKRVIEDPEDKESRLILLDPYKIFTHDSFEKAELSVLEQLNVSPQISKYNLELTYENFKSEEILRAVLPEGQDVTSGFSRVGHIAHLNLRDHQLPFKQLIGQVMIDKNPGITSAVNKINNIDNMYRNFHMEVLSGEQNMMTKVRENKYTYEFDFSKVYWNPRLSTEHSRITELLKAGDVLFDVFAGVGPFAIPVAKKNCTVFANDLNPESHKWLLHNCKLNKVDQKVKIFNLDGKDFLQGPVKEELIQLLSLSKERKPSVHIVMNLPAKAIEFLSAFKWLLDGQPCSNEFLPIVHCYSFSKDANPAKDVRQRAGAVLGISLEACSSVHLVRNVAPNKEMLCITFQIPAAVLYKNQTKNPENHEDPPLKRQRTAEAFSDEKTQIASNT.

The N-terminal 57 residues, 1–57 (MVLWILWRPFGFSRRLLKLERHSITESKSLIPLAWTSLTQTLSESPGIFLLGQRKRF), are a transit peptide targeting the mitochondrion. Residues His289, 327-328 (DL), 355-356 (DG), and Asn387 each bind S-adenosyl-L-methionine. Residues 478–509 (TKNPENHEDPPLKRQRTAEAFSDEKTQIASNT) are disordered.

It belongs to the class I-like SAM-binding methyltransferase superfamily. TRM5/TYW2 family. As to quaternary structure, monomer.

The protein localises to the mitochondrion matrix. It localises to the nucleus. Its subcellular location is the cytoplasm. It catalyses the reaction guanosine(37) in tRNA + S-adenosyl-L-methionine = N(1)-methylguanosine(37) in tRNA + S-adenosyl-L-homocysteine + H(+). In terms of biological role, involved in mitochondrial tRNA methylation. Specifically methylates the N1 position of guanosine-37 in various tRNAs. Methylation is not dependent on the nature of the nucleoside 5' of the target nucleoside. This is the first step in the biosynthesis of wybutosine (yW), a modified base adjacent to the anticodon of tRNAs and required for accurate decoding. This is tRNA (guanine(37)-N(1))-methyltransferase from Macaca mulatta (Rhesus macaque).